Consider the following 591-residue polypeptide: L-fucose isomerase (591 aa).

Active-site proton acceptor residues include Glu-337 and Asp-361. 3 residues coordinate Mn(2+): Glu-337, Asp-361, and His-528.

Belongs to the L-fucose isomerase family. As to quaternary structure, homohexamer. It depends on Mn(2+) as a cofactor.

It is found in the cytoplasm. It carries out the reaction L-fucose = L-fuculose. The protein operates within carbohydrate degradation; L-fucose degradation; L-lactaldehyde and glycerone phosphate from L-fucose: step 1/3. Its function is as follows. Converts the aldose L-fucose into the corresponding ketose L-fuculose. This chain is L-fucose isomerase, found in Salmonella paratyphi B (strain ATCC BAA-1250 / SPB7).